We begin with the raw amino-acid sequence, 388 residues long: Leucine aminopeptidase 1 (388 aa).

An N-terminal signal peptide occupies residues 1–19; the sequence is MRSSVLFSLYAATLVAAVA. A propeptide spanning residues 20–88 is cleaved from the precursor; that stretch reads HPKDPQIVLQ…TLNHKLSTES (69 aa). N98 carries an N-linked (GlcNAc...) asparagine glycan. The Zn(2+) site is built by H187, D206, E245, and D272. Residues C321 and C325 are joined by a disulfide bond. H354 contributes to the Zn(2+) binding site.

It belongs to the peptidase M28 family. M28E subfamily. As to quaternary structure, monomer. Requires Zn(2+) as cofactor.

Its subcellular location is the secreted. Functionally, extracellular aminopeptidase that allows assimilation of proteinaceous substrates. The sequence is that of Leucine aminopeptidase 1 (LAP1) from Leptosphaeria maculans (strain JN3 / isolate v23.1.3 / race Av1-4-5-6-7-8) (Blackleg fungus).